The primary structure comprises 774 residues: Chondroitin sulfate synthase 2 (774 aa).

Over 1–15 (MRASLLLSVLRPAGP) the chain is Cytoplasmic. The helical; Signal-anchor for type II membrane protein transmembrane segment at 16 to 34 (VAVGISLGFTLSLLSVTWV) threads the bilayer. Residues 35–774 (EEPCGPGPPQ…LFEQEQGNST (740 aa)) are Lumenal-facing. Residues 37–103 (PCGPGPPQPG…AQPGQATKKA (67 aa)) are disordered. Over residues 54–67 (GNTNAARRPNSVQP) the composition is skewed to polar residues. Residues asparagine 138 and asparagine 361 are each glycosylated (N-linked (GlcNAc...) asparagine). Aspartate 616 serves as a coordination point for a divalent metal cation.

This sequence belongs to the chondroitin N-acetylgalactosaminyltransferase family. As to quaternary structure, interacts with PRKN. Mn(2+) serves as cofactor. The cofactor is Co(2+). In terms of tissue distribution, isoform 1, isoform 2 and isoform 3 are expressed in brain (at protein level).

The protein resides in the golgi apparatus. The protein localises to the golgi stack membrane. It localises to the cytoplasm. It is found in the cytosol. Its subcellular location is the mitochondrion. The protein resides in the mitochondrion matrix. The enzyme catalyses 3-O-(beta-D-GlcA-(1-&gt;3)-beta-D-GalNAc-(1-&gt;4)-beta-D-GlcA-(1-&gt;3)-beta-D-Gal-(1-&gt;3)-beta-D-Gal-(1-&gt;4)-beta-D-Xyl)-L-seryl-[protein] + UDP-N-acetyl-alpha-D-galactosamine = 3-O-(beta-D-GalNAc-(1-&gt;4)-beta-D-GlcA-(1-&gt;3)-beta-D-GalNAc-(1-&gt;4)-beta-D-GlcA-(1-&gt;3)-beta-D-Gal-(1-&gt;3)-beta-D-Gal-(1-&gt;4)-beta-D-Xyl)-L-seryl-[protein] + UDP + H(+). It catalyses the reaction 3-O-{beta-D-GlcA-(1-&gt;3)-[beta-D-GalNAc-(1-&gt;4)-beta-D-GlcA-(1-&gt;3)](n)-beta-D-GalNAc-(1-&gt;4)-beta-D-GlcA-(1-&gt;3)-beta-D-Gal-(1-&gt;3)-beta-D-Gal-(1-&gt;4)-beta-D-Xyl}-L-seryl-[protein] + UDP-N-acetyl-alpha-D-galactosamine = 3-O-{[beta-D-GalNAc-(1-&gt;4)-beta-D-GlcA-(1-&gt;3)](n+1)-beta-D-GalNAc-(1-&gt;4)-beta-D-GlcA-(1-&gt;3)-beta-D-Gal-(1-&gt;3)-beta-D-Gal-(1-&gt;4)-beta-D-Xyl}-L-seryl-[protein] + UDP + H(+). The catalysed reaction is 3-O-(beta-D-GalNAc-(1-&gt;4)-beta-D-GlcA-(1-&gt;3)-beta-D-Gal-(1-&gt;3)-beta-D-Gal-(1-&gt;4)-beta-D-Xyl)-L-seryl-[protein] + UDP-alpha-D-glucuronate = 3-O-(beta-D-GlcA-(1-&gt;3)-beta-D-GalNAc-(1-&gt;4)-beta-D-GlcA-(1-&gt;3)-beta-D-Gal-(1-&gt;3)-beta-D-Gal-(1-&gt;4)-beta-D-Xyl)-L-seryl-[protein] + UDP + H(+). It carries out the reaction 3-O-{[beta-D-GalNAc-(1-&gt;4)-beta-D-GlcA-(1-&gt;3)](n)-beta-D-GalNAc-(1-&gt;4)-beta-D-GlcA-(1-&gt;3)-beta-D-Gal-(1-&gt;3)-beta-D-Gal-(1-&gt;4)-beta-D-Xyl}-L-seryl-[protein] + UDP-alpha-D-glucuronate = 3-O-{beta-D-GlcA-(1-&gt;3)-[beta-D-GalNAc-(1-&gt;4)-beta-D-GlcA-(1-&gt;3)](n)-beta-D-GalNAc-(1-&gt;4)-beta-D-GlcA-(1-&gt;3)-beta-D-Gal-(1-&gt;3)-beta-D-Gal-(1-&gt;4)-beta-D-Xyl}-L-seryl-[protein] + UDP + H(+). Its function is as follows. Has both beta-1,3-glucuronic acid and beta-1,4-N-acetylgalactosamine transferase activity. Transfers glucuronic acid (GlcUA) from UDP-GlcUA and N-acetylgalactosamine (GalNAc) from UDP-GalNAc to the non-reducing end of the elongating chondroitin polymer. Seems to act as a specific activating factor for CHSY1 in chondroitin polymerization. Functionally, may facilitate PRKN transport into the mitochondria. In collaboration with PRKN, may enhance cell viability and protect cells from oxidative stress. This chain is Chondroitin sulfate synthase 2, found in Mus musculus (Mouse).